Here is a 104-residue protein sequence, read N- to C-terminus: Iron-sulfur cluster assembly protein CyaY (104 aa).

It belongs to the frataxin family.

Its function is as follows. Involved in iron-sulfur (Fe-S) cluster assembly. May act as a regulator of Fe-S biogenesis. This chain is Iron-sulfur cluster assembly protein CyaY, found in Aeromonas hydrophila subsp. hydrophila (strain ATCC 7966 / DSM 30187 / BCRC 13018 / CCUG 14551 / JCM 1027 / KCTC 2358 / NCIMB 9240 / NCTC 8049).